The following is a 729-amino-acid chain: Neurochondrin (729 aa).

Ser-2 is modified (N-acetylserine). Ser-2 carries the post-translational modification Phosphoserine. 2 S-palmitoyl cysteine lipidation sites follow: Cys-3 and Cys-4. An Asymmetric dimethylarginine modification is found at Arg-75. The residue at position 448 (Ser-448) is a Phosphoserine.

This sequence belongs to the neurochondrin family. As to quaternary structure, interacts with MCHR1. Interacts with SEMA4C. Interacts with DIAPH1 (via FH3 domain). Interacts with GRM5. Post-translationally, palmitoylated. Palmitoylation by ZDHHC1, ZDHHC3 and ZDHHC11 regulates the association of NCDN with endosome membranes. May also be palmitoylated by ZDHHC7. Expressed in the neuronal, chondral and bone tissues. Expressed in dendrites. Enriched in the brain in the surface layer I-IV. In brains, protein level increases in male but decreases in female with advancing age (at protein level). In adult brains, it is highly expressed in the forebrain and hindbrain. Highly expressed in the hippocampus, piriform cortex, septum, amygdaloid complex, medial geniculate nucleus, inferior colliculus, cerebellar nuclei and the nuclei of the Vth, VIIth, and XIIth cranial nerves. In bone tissues, it is expressed in osteoblasts and osteocytes.

Its subcellular location is the cytoplasm. It is found in the cytosol. The protein resides in the endosome membrane. The protein localises to the cell projection. It localises to the dendrite. Its subcellular location is the postsynapse. Probably involved in signal transduction, in the nervous system, via increasing cell surface localization of GRM5 and positively regulating its signaling. Required for the spatial learning process. Acts as a negative regulator of Ca(2+)-calmodulin-dependent protein kinase 2 (CaMK2) phosphorylation. May play a role in modulating melanin-concentrating hormone-mediated functions via its interaction with MCHR1 that interferes with G protein-coupled signal transduction. May be involved in bone metabolism. May also be involved in neurite outgrowth. In Mus musculus (Mouse), this protein is Neurochondrin (Ncdn).